The following is a 600-amino-acid chain: DNA mismatch repair protein MutL (600 aa).

The segment at 327–405 (DGSRAATTGA…FSPQPAAAEP (79 aa)) is disordered. A compositionally biased stretch (polar residues) spans 349-367 (PNSQRPQTAWSAETSSSRP).

Belongs to the DNA mismatch repair MutL/HexB family.

This protein is involved in the repair of mismatches in DNA. It is required for dam-dependent methyl-directed DNA mismatch repair. May act as a 'molecular matchmaker', a protein that promotes the formation of a stable complex between two or more DNA-binding proteins in an ATP-dependent manner without itself being part of a final effector complex. The chain is DNA mismatch repair protein MutL from Rhizobium johnstonii (strain DSM 114642 / LMG 32736 / 3841) (Rhizobium leguminosarum bv. viciae).